We begin with the raw amino-acid sequence, 157 residues long: Small ribosomal subunit protein uS7 (157 aa).

It belongs to the universal ribosomal protein uS7 family. As to quaternary structure, part of the 30S ribosomal subunit. Contacts proteins S9 and S11.

In terms of biological role, one of the primary rRNA binding proteins, it binds directly to 16S rRNA where it nucleates assembly of the head domain of the 30S subunit. Is located at the subunit interface close to the decoding center, probably blocks exit of the E-site tRNA. This chain is Small ribosomal subunit protein uS7, found in Francisella tularensis subsp. holarctica (strain OSU18).